The chain runs to 167 residues: Protein archease (167 aa).

Alanine 2 is modified (N-acetylalanine). The Ca(2+) site is built by aspartate 39, aspartate 166, and isoleucine 167.

It belongs to the archease family. Component of the tRNA-splicing ligase complex.

In terms of biological role, component of the tRNA-splicing ligase complex required to facilitate the enzymatic turnover of catalytic subunit RTCB. Together with DDX1, acts by facilitating the guanylylation of RTCB, a key intermediate step in tRNA ligation. This chain is Protein archease (ZBTB8OS), found in Bos taurus (Bovine).